Consider the following 257-residue polypeptide: Ras-related protein Rab-26 (257 aa).

The disordered stretch occupies residues 1–53; that stretch reads MSRKKTPKSKGGSVPAASTLPAAANGPRLAHPRTARPGPEAPPNGPPQSGRPS. Ser73, Gly74, Val75, Gly76, Lys77, Thr78, Cys79, Ser96, and Thr97 together coordinate GTP. Thr78 is a Mg(2+) binding site. Short sequence motifs (switch) lie at residues 87–102 and 120–137; these read GAFL…GIDF and DTAG…YYRD. Positions 97 and 120 each coordinate Mg(2+). GTP is bound by residues Gly123, Asn178, Lys179, Asp181, Ala209, and Lys210. 2 S-geranylgeranyl cysteine lipidation sites follow: Cys254 and Cys255.

This sequence belongs to the small GTPase superfamily. Rab family. Interacts with ADRA2B. Interacts with RIMS1. Mg(2+) serves as cofactor. As to expression, expressed in pancreas, kidney, brain, submandibular gland, and lung.

It localises to the cytoplasmic vesicle. The protein resides in the secretory vesicle membrane. It is found in the golgi apparatus membrane. The catalysed reaction is GTP + H2O = GDP + phosphate + H(+). Regulated by guanine nucleotide exchange factors (GEFs) which promote the exchange of bound GDP for free GTP. Regulated by GTPase activating proteins (GAPs) which increase the GTP hydrolysis activity. Inhibited by GDP dissociation inhibitors (GDIs). Its function is as follows. The small GTPases Rab are key regulators of intracellular membrane trafficking, from the formation of transport vesicles to their fusion with membranes. Rabs cycle between an inactive GDP-bound form and an active GTP-bound form that is able to recruit to membranes different set of downstream effectors directly responsible for vesicle formation, movement, tethering and fusion. RAB26 mediates transport of ADRA2A and ADRA2B from the Golgi to the cell membrane. Plays a role in the maturation of zymogenic granules and in pepsinogen secretion in the stomach. Plays a role in the secretion of amylase from acinar granules in the parotid gland. The protein is Ras-related protein Rab-26 of Rattus norvegicus (Rat).